The primary structure comprises 382 residues: Bifunctional enzyme IspD/IspF (382 aa).

The interval 1–225 (MTGKPSIAAL…AEERMAMISR (225 aa)) is 2-C-methyl-D-erythritol 4-phosphate cytidylyltransferase. Positions 225–382 (RTAMGFDVHG…AVATVRVPSI (158 aa)) are 2-C-methyl-D-erythritol 2,4-cyclodiphosphate synthase. Residues Asp231 and His233 each contribute to the a divalent metal cation site. Residues 231 to 233 (DVH) and 257 to 258 (HS) each bind 4-CDP-2-C-methyl-D-erythritol 2-phosphate. His265 is a binding site for a divalent metal cation. 4-CDP-2-C-methyl-D-erythritol 2-phosphate contacts are provided by residues 279–281 (DIG), 355–358 (TTTE), Phe362, and Arg365.

In the N-terminal section; belongs to the IspD/TarI cytidylyltransferase family. IspD subfamily. This sequence in the C-terminal section; belongs to the IspF family. A divalent metal cation serves as cofactor.

It carries out the reaction 2-C-methyl-D-erythritol 4-phosphate + CTP + H(+) = 4-CDP-2-C-methyl-D-erythritol + diphosphate. The catalysed reaction is 4-CDP-2-C-methyl-D-erythritol 2-phosphate = 2-C-methyl-D-erythritol 2,4-cyclic diphosphate + CMP. Its pathway is isoprenoid biosynthesis; isopentenyl diphosphate biosynthesis via DXP pathway; isopentenyl diphosphate from 1-deoxy-D-xylulose 5-phosphate: step 2/6. It participates in isoprenoid biosynthesis; isopentenyl diphosphate biosynthesis via DXP pathway; isopentenyl diphosphate from 1-deoxy-D-xylulose 5-phosphate: step 4/6. Bifunctional enzyme that catalyzes the formation of 4-diphosphocytidyl-2-C-methyl-D-erythritol from CTP and 2-C-methyl-D-erythritol 4-phosphate (MEP) (IspD), and catalyzes the conversion of 4-diphosphocytidyl-2-C-methyl-D-erythritol 2-phosphate (CDP-ME2P) to 2-C-methyl-D-erythritol 2,4-cyclodiphosphate (ME-CPP) with a corresponding release of cytidine 5-monophosphate (CMP) (IspF). In Rhizorhabdus wittichii (strain DSM 6014 / CCUG 31198 / JCM 15750 / NBRC 105917 / EY 4224 / RW1) (Sphingomonas wittichii), this protein is Bifunctional enzyme IspD/IspF.